A 544-amino-acid polypeptide reads, in one-letter code: Methionine--tRNA ligase 2 (544 aa).

The short motif at P10–H20 is the 'HIGH' region element. Residues C141, C144, C153, and C156 each coordinate Zn(2+). The 'KMSKS' region motif lies at K329–S333. T332 provides a ligand contact to ATP.

It belongs to the class-I aminoacyl-tRNA synthetase family. MetG type 1 subfamily. In terms of assembly, monomer. Requires Zn(2+) as cofactor.

It is found in the cytoplasm. The enzyme catalyses tRNA(Met) + L-methionine + ATP = L-methionyl-tRNA(Met) + AMP + diphosphate. In terms of biological role, is required not only for elongation of protein synthesis but also for the initiation of all mRNA translation through initiator tRNA(fMet) aminoacylation. This Bacillus cereus (strain ATCC 14579 / DSM 31 / CCUG 7414 / JCM 2152 / NBRC 15305 / NCIMB 9373 / NCTC 2599 / NRRL B-3711) protein is Methionine--tRNA ligase 2.